Reading from the N-terminus, the 323-residue chain is Viral cathepsin (323 aa).

Positions 1–16 are cleaved as a signal peptide; sequence MNKILFYLFVYGVVNS. The propeptide at 17-112 is activation peptide; the sequence is AAYDLLKAPN…IVLDQPPGKG (96 aa). Intrachain disulfides connect cysteine 133-cysteine 174, cysteine 167-cysteine 207, and cysteine 262-cysteine 310. Cysteine 136 is a catalytic residue. An N-linked (GlcNAc...) asparagine; by host glycan is attached at asparagine 158. Active-site residues include histidine 269 and asparagine 289.

This sequence belongs to the peptidase C1 family. Post-translationally, synthesized as an inactive proenzyme and activated by proteolytic removal of the inhibitory propeptide.

The enzyme catalyses Endopeptidase of broad specificity, hydrolyzing substrates of both cathepsin L and cathepsin B.. Functionally, cysteine protease that plays an essential role in host liquefaction to facilitate horizontal transmission of the virus. May participate in the degradation of foreign protein expressed by the baculovirus system. This Helicoverpa zea (Corn earworm moth) protein is Viral cathepsin (VCATH).